Consider the following 61-residue polypeptide: Tubulin alpha-4 chain (61 aa).

Gln-11 is a GTP binding site. Residues 35–61 (QMPGDKTIGGGDAEFDEGEDGDEGDEY) are disordered. Lys-40 carries the post-translational modification N6-acetyllysine. Over residues 47 to 61 (AEFDEGEDGDEGDEY) the composition is skewed to acidic residues.

Belongs to the tubulin family. Dimer of alpha and beta chains. A typical microtubule is a hollow water-filled tube with an outer diameter of 25 nm and an inner diameter of 15 nM. Alpha-beta heterodimers associate head-to-tail to form protofilaments running lengthwise along the microtubule wall with the beta-tubulin subunit facing the microtubule plus end conferring a structural polarity. Microtubules usually have 13 protofilaments but different protofilament numbers can be found in some organisms and specialized cells. The cofactor is Mg(2+). Post-translationally, undergoes a tyrosination/detyrosination cycle, the cyclic removal and re-addition of a C-terminal tyrosine residue by the enzymes tubulin tyrosine carboxypeptidase (TTCP) and tubulin tyrosine ligase (TTL), respectively. In terms of processing, acetylation of alpha chains at Lys-40 stabilizes microtubules and affects affinity and processivity of microtubule motors. This modification has a role in multiple cellular functions, ranging from cell motility, cell cycle progression or cell differentiation to intracellular trafficking and signaling.

It localises to the cytoplasm. The protein resides in the cytoskeleton. It carries out the reaction GTP + H2O = GDP + phosphate + H(+). Functionally, tubulin is the major constituent of microtubules, a cylinder consisting of laterally associated linear protofilaments composed of alpha- and beta-tubulin heterodimers. Microtubules grow by the addition of GTP-tubulin dimers to the microtubule end, where a stabilizing cap forms. Below the cap, tubulin dimers are in GDP-bound state, owing to GTPase activity of alpha-tubulin. The chain is Tubulin alpha-4 chain (TUBA4) from Zea mays (Maize).